The primary structure comprises 271 residues: Digeranylgeranylglyceryl phosphate synthase (271 aa).

8 consecutive transmembrane segments (helical) span residues 11 to 31 (INCA…GARL), 33 to 53 (VGAV…NAIN), 88 to 108 (FAVG…IAAL), 125 to 145 (LIGN…GAAV), 149 to 169 (PAPA…REIL), 201 to 221 (VFAI…VVGW), 224 to 244 (LVLA…AVAG), and 251 to 271 (AQRV…ASLL).

Belongs to the UbiA prenyltransferase family. DGGGP synthase subfamily. Mg(2+) is required as a cofactor.

The protein resides in the cell membrane. It carries out the reaction sn-3-O-(geranylgeranyl)glycerol 1-phosphate + (2E,6E,10E)-geranylgeranyl diphosphate = 2,3-bis-O-(geranylgeranyl)-sn-glycerol 1-phosphate + diphosphate. The protein operates within membrane lipid metabolism; glycerophospholipid metabolism. Its function is as follows. Prenyltransferase that catalyzes the transfer of the geranylgeranyl moiety of geranylgeranyl diphosphate (GGPP) to the C2 hydroxyl of (S)-3-O-geranylgeranylglyceryl phosphate (GGGP). This reaction is the second ether-bond-formation step in the biosynthesis of archaeal membrane lipids. The chain is Digeranylgeranylglyceryl phosphate synthase from Methanopyrus kandleri (strain AV19 / DSM 6324 / JCM 9639 / NBRC 100938).